We begin with the raw amino-acid sequence, 423 residues long: Imidazolonepropionase (423 aa).

Residues histidine 78 and histidine 80 each coordinate Fe(3+). Positions 78 and 80 each coordinate Zn(2+). Arginine 87, tyrosine 150, and histidine 183 together coordinate 4-imidazolone-5-propanoate. Tyrosine 150 contributes to the N-formimidoyl-L-glutamate binding site. Histidine 247 contacts Fe(3+). Residue histidine 247 participates in Zn(2+) binding. A 4-imidazolone-5-propanoate-binding site is contributed by glutamate 250. Aspartate 322 contacts Fe(3+). Aspartate 322 contributes to the Zn(2+) binding site. N-formimidoyl-L-glutamate contacts are provided by asparagine 324 and glycine 326. Serine 327 is a 4-imidazolone-5-propanoate binding site.

This sequence belongs to the metallo-dependent hydrolases superfamily. HutI family. Requires Zn(2+) as cofactor. Fe(3+) serves as cofactor.

The protein localises to the cytoplasm. It catalyses the reaction 4-imidazolone-5-propanoate + H2O = N-formimidoyl-L-glutamate. The protein operates within amino-acid degradation; L-histidine degradation into L-glutamate; N-formimidoyl-L-glutamate from L-histidine: step 3/3. Its function is as follows. Catalyzes the hydrolytic cleavage of the carbon-nitrogen bond in imidazolone-5-propanoate to yield N-formimidoyl-L-glutamate. It is the third step in the universal histidine degradation pathway. The polypeptide is Imidazolonepropionase (Bacillus cereus (strain B4264)).